The sequence spans 1103 residues: Ubiquitin carboxyl-terminal hydrolase 7 (1103 aa).

Positions methionine 1 to glutamine 11 are enriched in low complexity. Residues methionine 1–asparagine 40 are disordered. An interaction with TSPYL5 region spans residues methionine 1–lysine 209. Residue serine 19 is modified to Phosphoserine. Residues glutamate 20–aspartate 32 show a composition bias toward acidic residues. Phosphoserine is present on residues serine 50 and serine 54. The segment at serine 54–lysine 209 is interaction with p53/TP53 and MDM2. The MATH domain occupies glutamate 69–valine 196. The segment at threonine 71–tryptophan 206 is necessary for nuclear localization. In terms of domain architecture, USP spans valine 215 to glutamate 522. Cysteine 224 serves as the catalytic Nucleophile. Residue histidine 465 is the Proton acceptor of the active site. Lysine 870 is subject to N6-acetyllysine; alternate. Lysine 870 is covalently cross-linked (Glycyl lysine isopeptide (Lys-Gly) (interchain with G-Cter in SUMO2); alternate). Residue lysine 870 forms a Glycyl lysine isopeptide (Lys-Gly) (interchain with G-Cter in ubiquitin); alternate linkage. Lysine 883 participates in a covalent cross-link: Glycyl lysine isopeptide (Lys-Gly) (interchain with G-Cter in SUMO2). A Phosphoserine modification is found at serine 964. Residues lysine 1085 and lysine 1097 each carry the N6-acetyllysine modification.

Belongs to the peptidase C19 family. In terms of assembly, monomer. Homodimer. Part of a complex with DAXX, MDM2, RASSF1 and USP7. Part of a complex with DAXX, MDM2 and USP7. Interacts with MDM2; the interaction is independent of p53/TP53. Interacts with DAXX; the interaction is direct and independent of MDM2 and p53/TP53. Component of a complex composed of KMT2E, OGT and USP7; the complex stabilizes KMT2E, preventing KMT2E ubiquitination and proteasomal-mediated degradation. Interacts (via MATH domain) with KMT2E. Interacts with OGT. Interacts with FOXO4; the interaction is enhanced in presence of hydrogen peroxide and occurs independently of p53/TP53. Interacts with p53/TP53; the interaction is enhanced in response to DNA damage; the interaction is impaired by TSPYL5. Interacts with PTEN; the interaction is direct. Interacts with ATXN1 and the strength of interaction is influenced by the length of the poly-Gln region in ATXN1. A weaker interaction seen with mutants having longer poly-Gln regions. Interacts with KIAA1530/UVSSA. Interacts with MEX3C and antagonizes its ability to degrade mRNA. Interacts with DNMT1 and UHRF1. Interacts with FOXP3. Interacts (via MATH domain) with RNF220. Associated component of the Polycomb group (PcG) multiprotein PRC1-like complex. Interacts with EPOP. Interacts with OTUD4 and USP9X; the interaction is direct. Interacts with CRY2. Interacts with REST. Interacts with ERCC6. Part of a complex consisting of USP7, MAGEL2 and TRIM27; directly interacts with MAGEL2; directly interacts with TRIM27. Polyneddylated. In terms of processing, not sumoylated. Post-translationally, ubiquitinated at Lys-870. Polyubiquitinated. In terms of tissue distribution, strongly expressed in the testis, spleen and brain. Weakly expressed in the stomach, small intestine, skeletal muscle and uterus.

It localises to the nucleus. Its subcellular location is the cytoplasm. The protein localises to the PML body. The protein resides in the chromosome. It catalyses the reaction Thiol-dependent hydrolysis of ester, thioester, amide, peptide and isopeptide bonds formed by the C-terminal Gly of ubiquitin (a 76-residue protein attached to proteins as an intracellular targeting signal).. Functionally, hydrolase that deubiquitinates target proteins such as ARMC5, FOXO4, DEPTOR, KAT5, p53/TP53, MDM2, ERCC6, DNMT1, UHRF1, PTEN, KMT2E/MLL5 and DAXX. Together with DAXX, prevents MDM2 self-ubiquitination and enhances the E3 ligase activity of MDM2 towards p53/TP53, thereby promoting p53/TP53 ubiquitination and proteasomal degradation. Deubiquitinates p53/TP53, preventing degradation of p53/TP53, and enhances p53/TP53-dependent transcription regulation, cell growth repression and apoptosis. Deubiquitinates p53/TP53 and MDM2 and strongly stabilizes p53/TP53 even in the presence of excess MDM2, and also induces p53/TP53-dependent cell growth repression and apoptosis. Deubiquitination of FOXO4 in presence of hydrogen peroxide is not dependent on p53/TP53 and inhibits FOXO4-induced transcriptional activity. In association with DAXX, is involved in the deubiquitination and translocation of PTEN from the nucleus to the cytoplasm, both processes that are counteracted by PML. Deubiquitinates KMT2E preventing KMT2E proteasomal-mediated degradation. Involved in cell proliferation during early embryonic development. Involved in transcription-coupled nucleotide excision repair (TC-NER) in response to UV damage: recruited to DNA damage sites following interaction with KIAA1530/UVSSA and promotes deubiquitination of ERCC6, preventing UV-induced degradation of ERCC6. Involved in maintenance of DNA methylation via its interaction with UHRF1 and DNMT1: acts by mediating deubiquitination of UHRF1 and DNMT1, preventing their degradation and promoting DNA methylation by DNMT1. Deubiquitinates alkylation repair enzyme ALKBH3. OTUD4 recruits USP7 and USP9X to stabilize ALKBH3, thereby promoting the repair of alkylated DNA lesions. Acts as a chromatin regulator via its association with the Polycomb group (PcG) multiprotein PRC1-like complex; may act by deubiquitinating components of the PRC1-like complex. Able to mediate deubiquitination of histone H2B; it is however unsure whether this activity takes place in vivo. Exhibits a preference towards 'Lys-48'-linked ubiquitin chains. Increases regulatory T-cells (Treg) suppressive capacity by deubiquitinating and stabilizing transcription factor FOXP3 which is crucial for Treg cell function. Plays a role in the maintenance of the circadian clock periodicity via deubiquitination and stabilization of the CRY1 and CRY2 proteins. Deubiquitinates REST, thereby stabilizing REST and promoting the maintenance of neural progenitor cells. Deubiquitinates SIRT7, inhibiting SIRT7 histone deacetylase activity and regulating gluconeogenesis. Involved in the regulation of WASH-dependent actin polymerization at the surface of endosomes and the regulation of endosomal protein recycling. It maintains optimal WASH complex activity and precise F-actin levels via deubiquitination of TRIM27 and WASHC1. Mediates the deubiquitination of phosphorylated DEPTOR, promoting its stability and leading to decreased mTORC1 signaling. In Rattus norvegicus (Rat), this protein is Ubiquitin carboxyl-terminal hydrolase 7 (Usp7).